The sequence spans 147 residues: 6-pyruvoyl tetrahydrobiopterin synthase (147 aa).

Histidine 26 provides a ligand contact to Zn(2+). Residue cysteine 45 is the Proton acceptor of the active site. Residues histidine 51 and histidine 53 each contribute to the Zn(2+) site. Catalysis depends on charge relay system residues histidine 92 and glutamate 136.

It belongs to the PTPS family. Homohexamer formed of two homotrimers in a head to head fashion. Zn(2+) is required as a cofactor.

It catalyses the reaction 7,8-dihydroneopterin 3'-triphosphate = 6-pyruvoyl-5,6,7,8-tetrahydropterin + triphosphate + H(+). It participates in cofactor biosynthesis; tetrahydrobiopterin biosynthesis; tetrahydrobiopterin from 7,8-dihydroneopterin triphosphate: step 1/3. In terms of biological role, involved in the biosynthesis of tetrahydrobiopterin, an essential cofactor of aromatic amino acid hydroxylases. Catalyzes the transformation of 7,8-dihydroneopterin triphosphate into 6-pyruvoyl tetrahydropterin. This is 6-pyruvoyl tetrahydrobiopterin synthase (pts) from Poecilia reticulata (Guppy).